A 632-amino-acid chain; its full sequence is 2-hydroxyacyl-CoA lyase 2 (632 aa).

A helical transmembrane segment spans residues 10-30 (AWGFFSSFLLLAFGTLVAALL). Residue glutamate 98 participates in thiamine diphosphate binding. The segment at 470-550 (DFVGTAAYLV…VMALIGNDAG (81 aa)) is thiamine pyrophosphate binding. Mg(2+) contacts are provided by aspartate 521 and asparagine 547.

Belongs to the TPP enzyme family. It depends on Mg(2+) as a cofactor. The cofactor is thiamine diphosphate.

It localises to the endoplasmic reticulum membrane. It catalyses the reaction 2-hydroxyoctadecanoyl-CoA = heptadecanal + formyl-CoA. The enzyme catalyses (2R)-hydroxyhexadecanoyl-CoA = pentadecanal + formyl-CoA. Functionally, endoplasmic reticulum 2-OH acyl-CoA lyase involved in the cleavage (C1 removal) reaction in the fatty acid alpha-oxydation in a thiamine pyrophosphate (TPP)-dependent manner. Involved in the phytosphingosine degradation pathway. In Bos taurus (Bovine), this protein is 2-hydroxyacyl-CoA lyase 2 (ILVBL).